The following is a 163-amino-acid chain: RRM-domain-containing protein ECU01_0840 (163 aa).

The RRM domain maps to 84–163 (CSVKLSNLPL…SLGLSAEIAR (80 aa)).

The sequence is that of RRM-domain-containing protein ECU01_0840 from Encephalitozoon cuniculi (strain GB-M1) (Microsporidian parasite).